A 175-amino-acid polypeptide reads, in one-letter code: Dof zinc finger protein DOF1.5 (175 aa).

The interval 29 to 57 (EEQQQQQQPELQATTAVRSPSSDLTAEKR) is disordered. Residues 37 to 52 (PELQATTAVRSPSSDL) show a composition bias toward polar residues. A Dof-type zinc finger spans residues 62–116 (IPCPRCKSMETKFCYFNNYNVNQPRHFCKGCQRYWTAGGALRNVPVGAGRRKSKP). The Zn(2+) site is built by cysteine 64, cysteine 67, cysteine 89, and cysteine 92. Positions 162 to 168 (PVKRLRC) match the Nuclear localization signal motif.

It is found in the nucleus. Its function is as follows. Transcription factor that binds specifically to a 5'-AA[AG]G-3' consensus core sequence. Acts as a negative regulator in the phytochrome-mediated light responses. Controls phyB-mediated end-of-day response and the phyA-mediated anthocyanin accumulation. Not involved in direct flowering time regulation. In Arabidopsis thaliana (Mouse-ear cress), this protein is Dof zinc finger protein DOF1.5 (DOF1.5).